The following is a 326-amino-acid chain: MSSSNLGNVVCVTGASGYIASWLVRLLLHRGYTVKATVRDPNDPKKVDHLVKLDGAKERLQLFKANLLEEGAFDSVVQGCHGVFHTASPFYHDVKDPQAELIDPALKGTLNVLNSCAKSPSLKRVVLTSSIAAVAYNGKPRTPDVVVDETWFTDADFCAKSNLWYVVSKTLAEEAAWKFVKENNIDMVTINPAMVIGPLLQPVLNTSAAAILNLINGAQTFPNASFGWVNVKDVANAHILAYENASASGRHCLVERVAHYSEVVRILRELYPSLQLPEKCADDKPYVPIYQVSKEKAKSLGLEYTPLEVSIKETVESLKEKKFANL.

NADP(+) contacts are provided by residues 14-20 (GASGYIA), Arg-39, Lys-46, 66-67 (NL), and 86-88 (TAS). Residues Ser-130, Tyr-136, Arg-141, and Tyr-165 each contribute to the (E)-coniferaldehyde site. Residues Tyr-165, Lys-169, 192-195 (PAMV), and Ser-207 each bind NADP(+). The Proton donor role is filled by Lys-169. 5 residues coordinate (E)-coniferaldehyde: Met-194, Ser-207, Phe-226, Val-257, and Tyr-290.

It belongs to the NAD(P)-dependent epimerase/dehydratase family. Dihydroflavonol-4-reductase subfamily.

Its subcellular location is the cytoplasm. The enzyme catalyses (E)-cinnamaldehyde + NADP(+) + CoA = (E)-cinnamoyl-CoA + NADPH + H(+). It catalyses the reaction (E)-coniferaldehyde + NADP(+) + CoA = (E)-feruloyl-CoA + NADPH + H(+). The catalysed reaction is (E)-4-coumaraldehyde + NADP(+) + CoA = (E)-4-coumaroyl-CoA + NADPH + H(+). It functions in the pathway aromatic compound metabolism; phenylpropanoid biosynthesis. In terms of biological role, involved in lignin biosynthesis. Regulates the monolignol composition by catalyzing the conversion of cinnamoyl-CoAs into their corresponding cinnamaldehydes. Can use coumaraldehyde and coniferaldehyde as substrates, but barely sinapaldehyde. This chain is Cinnamoyl-CoA reductase CAD2, found in Medicago truncatula (Barrel medic).